The following is a 908-amino-acid chain: WD repeat-containing protein 44 (908 aa).

The binding activity stretch occupies residues M1–K163. Residues S17, S40, S61, S71, S86, and S116 each carry the phosphoserine modification. Composition is skewed to polar residues over residues Q108–A120 and N148–D157. 5 disordered regions span residues Q108–Q158, A202–I273, T309–T341, V391–Q418, and D454–Y474. Phosphothreonine occurs at positions 151 and 211. An important for interaction with ARHGAP26 AND ARHGAP10 region spans residues P203 to P249. Pro residues predominate over residues P225–P248. The residue at position 254 (S254) is a Phosphoserine. Basic and acidic residues predominate over residues S254 to K270. T263 is subject to Phosphothreonine. The interval V326–E339 is important for interaction with RAB11A. Phosphoserine is present on residues S334 and S336. T341 and T396 each carry phosphothreonine. A phosphoserine mark is found at S398, S465, S466, and S467. Positions D462 to G471 are enriched in acidic residues. Position 474 is a phosphotyrosine (Y474). The WD 1 repeat unit spans residues E504 to N543. Residues E552–N587 are disordered. Phosphoserine is present on residues S556 and S560. Positions S556–K568 are enriched in low complexity. WD repeat units lie at residues G600–C638, Q640–W680, G685–Q724, K735–K774, and V779–T818.

As to quaternary structure, interacts preferentially with the GTP-bound form of RAB11 when membrane-associated. Interacts with GRAF1/ARHGAP26 or GRAF2/ARHGAP10; the interaction connects the endoplasmic reticulum (ER) with the endosomal tubule. Interacts with VAPA (via MSP domain) or VAPB (via MSP domain); the interaction connects the ER with the endosomal tubule. Does not bind to other Rab and Rho small G proteins. Post-translationally, phosphorylated by ATK1; the phosphorylation stabilizes its interaction with RAB11A and RAB11B. In terms of tissue distribution, expressed in heart; brain; spleen; lung; liver; muscle and kidney.

It localises to the cytoplasm. The protein localises to the cytosol. The protein resides in the perinuclear region. Its subcellular location is the endosome membrane. It is found in the golgi apparatus. It localises to the trans-Golgi network. Downstream effector for Rab11 which regulates Rab11 intracellular membrane trafficking functions such as endocytic recycling, intracellular ciliogenesis and protein export. ATK1-mediated phosphorylation of WDR44 induces binding to Rab11 which activates endocytic recycling of transferrin receptor back to the plasma membrane. When bound to Rab11, prevents the formation of the ciliogenic Rab11-Rabin8/RAB3IP-RAB11FIP3 complex, therefore inhibiting preciliary trafficking and ciliogenesis. May participate in neo-synthesized protein export by connecting the endoplasmic reticulum (ER) with the endosomal tubule via direct interactions with the integral ER proteins VAPA or VAPB and the endosomal protein GRAFs (GRAF1/ARHGAP26 or GRAF2/ARHGAP10), which facilitates the transfer of proteins such as E-cadherin, MPP14 and CFTR into a Rab8-Rab10-Rab11-dependent export route. The polypeptide is WD repeat-containing protein 44 (Rattus norvegicus (Rat)).